The sequence spans 132 residues: MARPEWVTYSDEEIEEMILKFNKEGKSTSEIGIILRDQYGIPSVKEVTGERITQILKRNDQAGKYPEDLMNLIKRAVNIRDHLAENPKDLHSKRGLTIIESRIRRLASYYVNEGALPEGWRYNPKEAALLVK.

It belongs to the universal ribosomal protein uS15 family. In terms of assembly, part of the 30S ribosomal subunit.

The protein is Small ribosomal subunit protein uS15 of Methanobrevibacter smithii (strain ATCC 35061 / DSM 861 / OCM 144 / PS).